The following is a 555-amino-acid chain: B3 domain-containing protein REM10 (555 aa).

DNA-binding regions (TF-B3) lie at residues 11-103, 150-247, 276-372, and 460-554; these read NPQF…LGPS, CFVA…FPMT, SFVA…LPLN, and SQNR…FCSK.

It localises to the nucleus. In Arabidopsis thaliana (Mouse-ear cress), this protein is B3 domain-containing protein REM10 (REM10).